A 215-amino-acid polypeptide reads, in one-letter code: A-type ATP synthase subunit E (215 aa).

This sequence belongs to the V-ATPase E subunit family. As to quaternary structure, has multiple subunits with at least A(3), B(3), C, D, E, F, H, I and proteolipid K(x).

It is found in the cell membrane. Its function is as follows. Component of the A-type ATP synthase that produces ATP from ADP in the presence of a proton gradient across the membrane. This chain is A-type ATP synthase subunit E, found in Thermofilum pendens (strain DSM 2475 / Hrk 5).